Consider the following 572-residue polypeptide: Nuclear hormone receptor family member nhr-25 (572 aa).

Positions 15-90 form a DNA-binding region, nuclear receptor; sequence GEMCPVCGDR…MGMKMEAVRA (76 aa). NR C4-type zinc fingers lie at residues 18-38 and 54-78; these read CPVC…CESC and CSAE…FQKC. The NR LBD domain maps to 307–567; that stretch reads PTEKTVDHFY…PTPQATYTAV (261 aa).

The protein belongs to the nuclear hormone receptor family. As to quaternary structure, interacts with lin-39. Interacts with nob-1. As to expression, expressed in the epidermis, the developing somatic gonad, and a subset of other epithelial cells.

It is found in the nucleus. In terms of biological role, orphan nuclear receptor and probable transcription activator, required during development. Plays a role in male tail tip morphogenesis regulating the expression of the transcription factor dmd-3 in a negative feedback loop. Regulates vulval precursor cell (VPC) differentiation, in concert with homeobox protein lin-39. Involved in promoting embryogenesis, in concert with homeobox protein nob-1. May play a role in modulation of lifespan and immunity. This chain is Nuclear hormone receptor family member nhr-25, found in Caenorhabditis elegans.